A 229-amino-acid polypeptide reads, in one-letter code: ATP synthase subunit a 3 (229 aa).

The next 6 helical transmembrane spans lie at 25-45 (ADAV…SFLA), 86-106 (VATI…PGFF), 111-131 (NINT…VVGI), 142-162 (FCGP…IGHL), 181-201 (LVLI…MMLM), and 202-222 (GVLV…IYIQ).

This sequence belongs to the ATPase A chain family. In terms of assembly, F-type ATPases have 2 components, CF(1) - the catalytic core - and CF(0) - the membrane proton channel. CF(1) has five subunits: alpha(3), beta(3), gamma(1), delta(1), epsilon(1). CF(0) has three main subunits: a(1), b(2) and c(9-12). The alpha and beta chains form an alternating ring which encloses part of the gamma chain. CF(1) is attached to CF(0) by a central stalk formed by the gamma and epsilon chains, while a peripheral stalk is formed by the delta and b chains.

It localises to the cell inner membrane. Functionally, key component of the proton channel; it plays a direct role in the translocation of protons across the membrane. This chain is ATP synthase subunit a 3, found in Pelobacter propionicus (strain DSM 2379 / NBRC 103807 / OttBd1).